Here is a 575-residue protein sequence, read N- to C-terminus: TOX high mobility group box family member 3 (575 aa).

2 disordered regions span residues 189-258 (LGGA…QKPV) and 516-575 (QQLQ…VSIF). Positions 195–214 (SHTSPSPPASKSATPSPSSS) are enriched in low complexity. Over residues 222-238 (DANRAIGEKRTAPDSGK) the composition is skewed to basic and acidic residues. Positions 239-249 (KPKTPKKKKKK) are enriched in basic residues. Positions 254–322 (PQKPVSAYAL…EYLKALAAYR (69 aa)) form a DNA-binding region, HMG box. Residues 516-526 (QQLQHMQHQSQ) show a composition bias toward low complexity. The span at 527–541 (PSPRQHSPVTSQITS) shows a compositional bias: polar residues. The segment covering 548–575 (SPQPASQQHQPQIQSQTQTQVLPQVSIF) has biased composition (low complexity).

As to quaternary structure, homodimer. Interacts (via HGM box) with CITED1 (via C-terminus); the interaction increases estrogen-response element (ERE)-dependent transcription and protection against cell death. Interacts with CREB1 (phosphorylated form). Interacts with CREB1; the interaction is not depolarization dependent. Interacts with CREBBP (via C-terminus).

The protein resides in the nucleus. In terms of biological role, transcriptional coactivator of the p300/CBP-mediated transcription complex. Activates transactivation through cAMP response element (CRE) sites. Protects against cell death by inducing antiapoptotic and repressing pro-apoptotic transcripts. Stimulates transcription from the estrogen-responsive or BCL-2 promoters. Required for depolarization-induced transcription activation of the C-FOS promoter in neurons. Associates with chromatin to the estrogen-responsive C3 promoter region. This Mus musculus (Mouse) protein is TOX high mobility group box family member 3 (Tox3).